A 256-amino-acid chain; its full sequence is Ubiquinone/menaquinone biosynthesis C-methyltransferase UbiE (256 aa).

The S-adenosyl-L-methionine site is built by T78 and D99.

It belongs to the class I-like SAM-binding methyltransferase superfamily. MenG/UbiE family.

It catalyses the reaction a 2-demethylmenaquinol + S-adenosyl-L-methionine = a menaquinol + S-adenosyl-L-homocysteine + H(+). The catalysed reaction is a 2-methoxy-6-(all-trans-polyprenyl)benzene-1,4-diol + S-adenosyl-L-methionine = a 5-methoxy-2-methyl-3-(all-trans-polyprenyl)benzene-1,4-diol + S-adenosyl-L-homocysteine + H(+). Its pathway is quinol/quinone metabolism; menaquinone biosynthesis; menaquinol from 1,4-dihydroxy-2-naphthoate: step 2/2. It participates in cofactor biosynthesis; ubiquinone biosynthesis. Functionally, methyltransferase required for the conversion of demethylmenaquinol (DMKH2) to menaquinol (MKH2) and the conversion of 2-polyprenyl-6-methoxy-1,4-benzoquinol (DDMQH2) to 2-polyprenyl-3-methyl-6-methoxy-1,4-benzoquinol (DMQH2). This Geobacter sulfurreducens (strain ATCC 51573 / DSM 12127 / PCA) protein is Ubiquinone/menaquinone biosynthesis C-methyltransferase UbiE.